Here is a 532-residue protein sequence, read N- to C-terminus: Muscarinic acetylcholine receptor M5 (532 aa).

Residues Met1 to Glu29 are Extracellular-facing. Asn8 is a glycosylation site (N-linked (GlcNAc...) asparagine). A helical membrane pass occupies residues Val30 to Ile53. At Ser54–Asn66 the chain is on the cytoplasmic side. Residues Tyr67–Tyr87 traverse the membrane as a helical segment. Topologically, residues Thr88–Asp104 are extracellular. The chain crosses the membrane as a helical span at residues Leu105–Phe126. Over Asp127–Arg146 the chain is Cytoplasmic. Residues Ala147–Trp169 form a helical membrane-spanning segment. Residues Gln170 to Pro191 are Extracellular-facing. A helical transmembrane segment spans residues Thr192–Cys214. Residues Arg215–Thr443 lie on the Cytoplasmic side of the membrane. Residues Gln263–Trp294 form a disordered region. Residues Ser270–Ser279 show a composition bias toward low complexity. Residues Ile280–Trp294 show a composition bias toward polar residues. Residues Leu444 to Val464 form a helical membrane-spanning segment. Residues Ser465–His478 lie on the Extracellular side of the membrane. Residues Leu479–Cys498 form a helical membrane-spanning segment. Residues Asn499–Pro532 lie on the Cytoplasmic side of the membrane. A phosphothreonine mark is found at Thr501 and Thr505.

It belongs to the G-protein coupled receptor 1 family. Muscarinic acetylcholine receptor subfamily. CHRM5 sub-subfamily.

The protein resides in the cell membrane. Its subcellular location is the postsynaptic cell membrane. The muscarinic acetylcholine receptor mediates various cellular responses, including inhibition of adenylate cyclase, breakdown of phosphoinositides and modulation of potassium channels through the action of G proteins. Primary transducing effect is Pi turnover. The sequence is that of Muscarinic acetylcholine receptor M5 (CHRM5) from Saimiri boliviensis boliviensis (Bolivian squirrel monkey).